The following is a 36-amino-acid chain: Potassium channel toxin alpha-KTx 6.14 (36 aa).

4 disulfide bridges follow: Cys5–Cys25, Cys11–Cys30, Cys15–Cys32, and Cys20–Cys35.

In terms of tissue distribution, expressed by the venom gland.

Its subcellular location is the secreted. Blocks Shaker B channels expressed in Sf9 cells, with a dissociation constant of 52 nM. In Hoffmannihadrurus gertschi (Scorpion), this protein is Potassium channel toxin alpha-KTx 6.14.